Here is a 391-residue protein sequence, read N- to C-terminus: MKCLILALICLQLSEGLVVRQILHKGKSIRERMEENGVLEDFLRYNKKADPAAKFLFNKDAVAYEPITNYLDSFYFGEISIGTPPQNFLVLFDTGSSNLWVPSTYCQSQACSNHNRFSPSQSSTFTNGGQTYTLSYGSGSLTVVLGYDTVTVQNIVVSNQEFGLSESEPTSPFYYSDFDGILGMAYPAMAVGNSPTVMQGMLQQGQLSEPIFSFYFSRQPTHQYGGELILGGVDPQLYSGQITWTPVTQEVYWQIGIEEFAIGNQATGWCSQGCQAIVDTGTFLLAVPQQYMSAFLQATGAQQAQNGDFMVNCNYIQDMPTITFVINGSQFPLPPSAYVFNNNGYCRLGIEATYLPSPNGQPLWILGDVFLKEYYSVYDMANNRVGFAYSA.

An N-terminal signal peptide occupies residues 1–16 (MKCLILALICLQLSEG). The propeptide at 17–60 (LVVRQILHKGKSIRERMEENGVLEDFLRYNKKADPAAKFLFNKD) is activation peptide. The 314-residue stretch at 75 to 388 (YFGEISIGTP…DMANNRVGFA (314 aa)) folds into the Peptidase A1 domain. Asp93 is an active-site residue. 2 disulfides stabilise this stretch: Cys106/Cys111 and Cys270/Cys274. Residue Asp279 is part of the active site. Cys313 and Cys346 are disulfide-bonded.

Belongs to the peptidase A1 family.

The protein localises to the secreted. It carries out the reaction Degradation of gelatin, little activity on hemoglobin. Specificity on B chain of insulin more restricted than that of pepsin A. Does not cleave 1-Phe-|-Val-2, 4-Gln-|-His-5 or 23-Gly-|-Phe-24.. Hydrolyzes various peptides including beta-endorphin, insulin B chain, dynorphin A, and neurokinin A, with high specificity for the cleavage of the Phe-Xaa bonds. The chain is Pepsin B from Monodelphis domestica (Gray short-tailed opossum).